We begin with the raw amino-acid sequence, 196 residues long: Rac-like GTP-binding protein RAC13 (196 aa).

Residue 13-20 (GDGAVGKT) participates in GTP binding. The Effector region motif lies at 35–43 (YVPTVFDNF). GTP-binding positions include 60 to 64 (DTAGQ) and 118 to 121 (TKLD). C193 is subject to Cysteine methyl ester. C193 carries the S-geranylgeranyl cysteine lipid modification. Residues 194-196 (AFL) constitute a propeptide, removed in mature form.

This sequence belongs to the small GTPase superfamily. Rho family.

It is found in the cytoplasm. Its subcellular location is the membrane. Functionally, could participate in a signal transduction pathway that controls cytoskeletal organization. Inactive GDP-bound Rho GTPases reside in the cytosol, are found in a complex with Rho GDP-dissociation inhibitors (Rho GDIs), and are released from the GDI protein in order to translocate to membranes upon activation. This chain is Rac-like GTP-binding protein RAC13 (RAC13), found in Gossypium hirsutum (Upland cotton).